The chain runs to 405 residues: Tryptophan synthase beta chain (405 aa).

K86 bears the N6-(pyridoxal phosphate)lysine mark.

It belongs to the TrpB family. Tetramer of two alpha and two beta chains. The cofactor is pyridoxal 5'-phosphate.

It catalyses the reaction (1S,2R)-1-C-(indol-3-yl)glycerol 3-phosphate + L-serine = D-glyceraldehyde 3-phosphate + L-tryptophan + H2O. It participates in amino-acid biosynthesis; L-tryptophan biosynthesis; L-tryptophan from chorismate: step 5/5. The beta subunit is responsible for the synthesis of L-tryptophan from indole and L-serine. The polypeptide is Tryptophan synthase beta chain (Shewanella piezotolerans (strain WP3 / JCM 13877)).